The sequence spans 343 residues: 4-hydroxy-3-methylbut-2-enyl diphosphate reductase (343 aa).

Position 18 (C18) interacts with [4Fe-4S] cluster. Residues H47 and H83 each coordinate (2E)-4-hydroxy-3-methylbut-2-enyl diphosphate. Residues H47 and H83 each contribute to the dimethylallyl diphosphate site. Isopentenyl diphosphate is bound by residues H47 and H83. Residue C105 participates in [4Fe-4S] cluster binding. Position 133 (H133) interacts with (2E)-4-hydroxy-3-methylbut-2-enyl diphosphate. H133 contributes to the dimethylallyl diphosphate binding site. An isopentenyl diphosphate-binding site is contributed by H133. The Proton donor role is filled by E135. (2E)-4-hydroxy-3-methylbut-2-enyl diphosphate is bound at residue T174. C204 is a [4Fe-4S] cluster binding site. Positions 232, 233, 234, and 277 each coordinate (2E)-4-hydroxy-3-methylbut-2-enyl diphosphate. Positions 232, 233, 234, and 277 each coordinate dimethylallyl diphosphate. Residues S232, S233, N234, and S277 each contribute to the isopentenyl diphosphate site.

The protein belongs to the IspH family. Requires [4Fe-4S] cluster as cofactor.

It carries out the reaction isopentenyl diphosphate + 2 oxidized [2Fe-2S]-[ferredoxin] + H2O = (2E)-4-hydroxy-3-methylbut-2-enyl diphosphate + 2 reduced [2Fe-2S]-[ferredoxin] + 2 H(+). The enzyme catalyses dimethylallyl diphosphate + 2 oxidized [2Fe-2S]-[ferredoxin] + H2O = (2E)-4-hydroxy-3-methylbut-2-enyl diphosphate + 2 reduced [2Fe-2S]-[ferredoxin] + 2 H(+). The protein operates within isoprenoid biosynthesis; dimethylallyl diphosphate biosynthesis; dimethylallyl diphosphate from (2E)-4-hydroxy-3-methylbutenyl diphosphate: step 1/1. It participates in isoprenoid biosynthesis; isopentenyl diphosphate biosynthesis via DXP pathway; isopentenyl diphosphate from 1-deoxy-D-xylulose 5-phosphate: step 6/6. In terms of biological role, catalyzes the conversion of 1-hydroxy-2-methyl-2-(E)-butenyl 4-diphosphate (HMBPP) into a mixture of isopentenyl diphosphate (IPP) and dimethylallyl diphosphate (DMAPP). Acts in the terminal step of the DOXP/MEP pathway for isoprenoid precursor biosynthesis. In Bartonella henselae (strain ATCC 49882 / DSM 28221 / CCUG 30454 / Houston 1) (Rochalimaea henselae), this protein is 4-hydroxy-3-methylbut-2-enyl diphosphate reductase.